Reading from the N-terminus, the 572-residue chain is Proline--tRNA ligase (572 aa).

The protein belongs to the class-II aminoacyl-tRNA synthetase family. ProS type 1 subfamily. In terms of assembly, homodimer.

It is found in the cytoplasm. The catalysed reaction is tRNA(Pro) + L-proline + ATP = L-prolyl-tRNA(Pro) + AMP + diphosphate. In terms of biological role, catalyzes the attachment of proline to tRNA(Pro) in a two-step reaction: proline is first activated by ATP to form Pro-AMP and then transferred to the acceptor end of tRNA(Pro). As ProRS can inadvertently accommodate and process non-cognate amino acids such as alanine and cysteine, to avoid such errors it has two additional distinct editing activities against alanine. One activity is designated as 'pretransfer' editing and involves the tRNA(Pro)-independent hydrolysis of activated Ala-AMP. The other activity is designated 'posttransfer' editing and involves deacylation of mischarged Ala-tRNA(Pro). The misacylated Cys-tRNA(Pro) is not edited by ProRS. This is Proline--tRNA ligase from Leuconostoc mesenteroides subsp. mesenteroides (strain ATCC 8293 / DSM 20343 / BCRC 11652 / CCM 1803 / JCM 6124 / NCDO 523 / NBRC 100496 / NCIMB 8023 / NCTC 12954 / NRRL B-1118 / 37Y).